The primary structure comprises 376 residues: 1-deoxy-D-xylulose 5-phosphate reductoisomerase (376 aa).

NADPH is bound by residues Thr12, Gly13, Ser14, Ile15, Arg39, Gln40, and Asn110. Lys111 is a binding site for 1-deoxy-D-xylulose 5-phosphate. Residue Glu112 participates in NADPH binding. Residue Asp136 coordinates Mn(2+). 1-deoxy-D-xylulose 5-phosphate-binding residues include Ser137, Glu138, Ser162, and His185. Mn(2+) is bound at residue Glu138. Position 191 (Gly191) interacts with NADPH. Residues Ser198, Asn203, Lys204, and Glu207 each contribute to the 1-deoxy-D-xylulose 5-phosphate site. A Mn(2+)-binding site is contributed by Glu207.

Belongs to the DXR family. The cofactor is Mg(2+). Mn(2+) serves as cofactor.

It catalyses the reaction 2-C-methyl-D-erythritol 4-phosphate + NADP(+) = 1-deoxy-D-xylulose 5-phosphate + NADPH + H(+). The protein operates within isoprenoid biosynthesis; isopentenyl diphosphate biosynthesis via DXP pathway; isopentenyl diphosphate from 1-deoxy-D-xylulose 5-phosphate: step 1/6. In terms of biological role, catalyzes the NADPH-dependent rearrangement and reduction of 1-deoxy-D-xylulose-5-phosphate (DXP) to 2-C-methyl-D-erythritol 4-phosphate (MEP). The protein is 1-deoxy-D-xylulose 5-phosphate reductoisomerase of Treponema pallidum (strain Nichols).